A 527-amino-acid polypeptide reads, in one-letter code: Type 2 DNA topoisomerase 6 subunit B (527 aa).

ATP-binding positions include Asn39, Asp73, 94 to 95 (SK), 103 to 110 (GVFGLGLK), and Lys421.

Belongs to the TOP6B family. In terms of assembly, homodimer. Heterotetramer of two Top6A and two Top6B chains.

It catalyses the reaction ATP-dependent breakage, passage and rejoining of double-stranded DNA.. Functionally, relaxes both positive and negative superturns and exhibits a strong decatenase activity. This chain is Type 2 DNA topoisomerase 6 subunit B, found in Pyrobaculum aerophilum (strain ATCC 51768 / DSM 7523 / JCM 9630 / CIP 104966 / NBRC 100827 / IM2).